Here is a 572-residue protein sequence, read N- to C-terminus: Urease subunit alpha (572 aa).

In terms of domain architecture, Urease spans 134 to 572; the sequence is AGIDTHIHLI…AAMNQLYFFG (439 aa). Ni(2+)-binding residues include His-139, His-141, and Lys-222. The residue at position 222 (Lys-222) is an N6-carboxylysine. Residue His-224 participates in substrate binding. 2 residues coordinate Ni(2+): His-251 and His-277. His-325 acts as the Proton donor in catalysis. Asp-365 contributes to the Ni(2+) binding site.

This sequence belongs to the metallo-dependent hydrolases superfamily. Urease alpha subunit family. Heterotrimer of UreA (gamma), UreB (beta) and UreC (alpha) subunits. Three heterotrimers associate to form the active enzyme. Requires Ni cation as cofactor. In terms of processing, carboxylation allows a single lysine to coordinate two nickel ions.

The protein resides in the cytoplasm. It carries out the reaction urea + 2 H2O + H(+) = hydrogencarbonate + 2 NH4(+). The protein operates within nitrogen metabolism; urea degradation; CO(2) and NH(3) from urea (urease route): step 1/1. In Edwardsiella ictaluri (strain 93-146), this protein is Urease subunit alpha.